The chain runs to 351 residues: Dihydroorotate dehydrogenase (quinone) (351 aa).

Residues 61-65 and Thr85 contribute to the FMN site; that span reads AGLDK. Lys65 is a substrate binding site. 110–114 contacts substrate; the sequence is NRMGF. Residues Asn139 and Asn172 each contribute to the FMN site. Residue Asn172 participates in substrate binding. Residue Ser175 is the Nucleophile of the active site. Asn177 contacts substrate. FMN is bound by residues Lys217 and Thr245. 246-247 contacts substrate; that stretch reads NT. Residues Gly268, Gly297, and 318–319 contribute to the FMN site; that span reads YT.

This sequence belongs to the dihydroorotate dehydrogenase family. Type 2 subfamily. Monomer. FMN serves as cofactor.

The protein resides in the cell membrane. It carries out the reaction (S)-dihydroorotate + a quinone = orotate + a quinol. The protein operates within pyrimidine metabolism; UMP biosynthesis via de novo pathway; orotate from (S)-dihydroorotate (quinone route): step 1/1. Catalyzes the conversion of dihydroorotate to orotate with quinone as electron acceptor. This is Dihydroorotate dehydrogenase (quinone) from Xylella fastidiosa (strain M12).